Here is a 358-residue protein sequence, read N- to C-terminus: 4-hydroxy-2-oxovalerate aldolase 2 (358 aa).

One can recognise a Pyruvate carboxyltransferase domain in the interval 16–268; that stretch reads VLLHDMCLRD…ETGVDLFKLM (253 aa). 24-25 contributes to the substrate binding site; sequence RD. Residue aspartate 25 participates in Mn(2+) binding. Histidine 28 acts as the Proton acceptor in catalysis. Serine 178 and histidine 207 together coordinate substrate. Histidine 207 and histidine 209 together coordinate Mn(2+). A substrate-binding site is contributed by tyrosine 298.

This sequence belongs to the 4-hydroxy-2-oxovalerate aldolase family.

It catalyses the reaction (S)-4-hydroxy-2-oxopentanoate = acetaldehyde + pyruvate. The sequence is that of 4-hydroxy-2-oxovalerate aldolase 2 from Methylibium petroleiphilum (strain ATCC BAA-1232 / LMG 22953 / PM1).